The following is a 316-amino-acid chain: tRNA dimethylallyltransferase (316 aa).

ATP is bound at residue 17 to 24 (GPTASGKT). 19–24 (TASGKT) contacts substrate. 3 interaction with substrate tRNA regions span residues 42–45 (DSAL), 166–170 (QRLSR), and 247–252 (RCVGYR).

It belongs to the IPP transferase family. Monomer. Mg(2+) is required as a cofactor.

The catalysed reaction is adenosine(37) in tRNA + dimethylallyl diphosphate = N(6)-dimethylallyladenosine(37) in tRNA + diphosphate. In terms of biological role, catalyzes the transfer of a dimethylallyl group onto the adenine at position 37 in tRNAs that read codons beginning with uridine, leading to the formation of N6-(dimethylallyl)adenosine (i(6)A). The protein is tRNA dimethylallyltransferase of Salmonella enteritidis PT4 (strain P125109).